The sequence spans 72 residues: Large ribosomal subunit protein uL29 (72 aa).

This sequence belongs to the universal ribosomal protein uL29 family.

The sequence is that of Large ribosomal subunit protein uL29 from Thermodesulfovibrio yellowstonii (strain ATCC 51303 / DSM 11347 / YP87).